Here is a 147-residue protein sequence, read N- to C-terminus: UPF0306 protein YPK_3704 (147 aa).

It belongs to the UPF0306 family.

This is UPF0306 protein YPK_3704 from Yersinia pseudotuberculosis serotype O:3 (strain YPIII).